Reading from the N-terminus, the 234-residue chain is UDP-2,3-diacylglucosamine hydrolase (234 aa).

Mn(2+) is bound by residues Asp9, His11, Asp42, Asn80, and His115. 80-81 provides a ligand contact to substrate; it reads NR. The substrate site is built by Asp123, Ser161, Lys165, Lys168, and His196. The Mn(2+) site is built by His196 and His198.

It belongs to the LpxH family. It depends on Mn(2+) as a cofactor.

The protein resides in the cell inner membrane. The catalysed reaction is UDP-2-N,3-O-bis[(3R)-3-hydroxytetradecanoyl]-alpha-D-glucosamine + H2O = 2-N,3-O-bis[(3R)-3-hydroxytetradecanoyl]-alpha-D-glucosaminyl 1-phosphate + UMP + 2 H(+). The protein operates within glycolipid biosynthesis; lipid IV(A) biosynthesis; lipid IV(A) from (3R)-3-hydroxytetradecanoyl-[acyl-carrier-protein] and UDP-N-acetyl-alpha-D-glucosamine: step 4/6. In terms of biological role, hydrolyzes the pyrophosphate bond of UDP-2,3-diacylglucosamine to yield 2,3-diacylglucosamine 1-phosphate (lipid X) and UMP by catalyzing the attack of water at the alpha-P atom. Involved in the biosynthesis of lipid A, a phosphorylated glycolipid that anchors the lipopolysaccharide to the outer membrane of the cell. The protein is UDP-2,3-diacylglucosamine hydrolase of Histophilus somni (strain 129Pt) (Haemophilus somnus).